Reading from the N-terminus, the 274-residue chain is Large ribosomal subunit protein uL2 (274 aa).

Disordered regions lie at residues 28-59 (APYA…GGHK) and 222-274 (GAAM…RRTK). Polar residues predominate over residues 39-49 (KSGGRNNNGRI). A compositionally biased stretch (basic and acidic residues) spans 229 to 239 (DHPHGGGEGRS).

The protein belongs to the universal ribosomal protein uL2 family. As to quaternary structure, part of the 50S ribosomal subunit. Forms a bridge to the 30S subunit in the 70S ribosome.

Functionally, one of the primary rRNA binding proteins. Required for association of the 30S and 50S subunits to form the 70S ribosome, for tRNA binding and peptide bond formation. It has been suggested to have peptidyltransferase activity; this is somewhat controversial. Makes several contacts with the 16S rRNA in the 70S ribosome. The sequence is that of Large ribosomal subunit protein uL2 from Marinomonas sp. (strain MWYL1).